The chain runs to 333 residues: Methionyl-tRNA formyltransferase (333 aa).

106–109 serves as a coordination point for (6S)-5,6,7,8-tetrahydrofolate; it reads SLLP.

Belongs to the Fmt family.

It carries out the reaction L-methionyl-tRNA(fMet) + (6R)-10-formyltetrahydrofolate = N-formyl-L-methionyl-tRNA(fMet) + (6S)-5,6,7,8-tetrahydrofolate + H(+). Attaches a formyl group to the free amino group of methionyl-tRNA(fMet). The formyl group appears to play a dual role in the initiator identity of N-formylmethionyl-tRNA by promoting its recognition by IF2 and preventing the misappropriation of this tRNA by the elongation apparatus. The sequence is that of Methionyl-tRNA formyltransferase from Elusimicrobium minutum (strain Pei191).